Reading from the N-terminus, the 222-residue chain is ATP synthase F(0) complex subunit a (222 aa).

The next 6 helical transmembrane spans lie at 7 to 27 (AFFD…AILL), 64 to 84 (WSLM…LGLL), 93 to 113 (QLTV…ILGF), 132 to 152 (FLIP…PVTL), 160 to 180 (ITAG…LLSI), and 185 to 205 (ITVT…VALI).

This sequence belongs to the ATPase A chain family. Component of the ATP synthase complex composed at least of ATP5F1A/subunit alpha, ATP5F1B/subunit beta, ATP5MC1/subunit c (homooctomer), MT-ATP6/subunit a, MT-ATP8/subunit 8, ATP5ME/subunit e, ATP5MF/subunit f, ATP5MG/subunit g, ATP5MK/subunit k, ATP5MJ/subunit j, ATP5F1C/subunit gamma, ATP5F1D/subunit delta, ATP5F1E/subunit epsilon, ATP5PF/subunit F6, ATP5PB/subunit b, ATP5PD/subunit d, ATP5PO/subunit OSCP. ATP synthase complex consists of a soluble F(1) head domain (subunits alpha(3) and beta(3)) - the catalytic core - and a membrane F(0) domain - the membrane proton channel (subunits c, a, 8, e, f, g, k and j). These two domains are linked by a central stalk (subunits gamma, delta, and epsilon) rotating inside the F1 region and a stationary peripheral stalk (subunits F6, b, d, and OSCP). Interacts with DNAJC30; interaction is direct.

The protein resides in the mitochondrion inner membrane. The enzyme catalyses H(+)(in) = H(+)(out). Subunit a, of the mitochondrial membrane ATP synthase complex (F(1)F(0) ATP synthase or Complex V) that produces ATP from ADP in the presence of a proton gradient across the membrane which is generated by electron transport complexes of the respiratory chain. ATP synthase complex consist of a soluble F(1) head domain - the catalytic core - and a membrane F(1) domain - the membrane proton channel. These two domains are linked by a central stalk rotating inside the F(1) region and a stationary peripheral stalk. During catalysis, ATP synthesis in the catalytic domain of F(1) is coupled via a rotary mechanism of the central stalk subunits to proton translocation. With the subunit c (ATP5MC1), forms the proton-conducting channel in the F(0) domain, that contains two crucial half-channels (inlet and outlet) that facilitate proton movement from the mitochondrial intermembrane space (IMS) into the matrix. Protons are taken up via the inlet half-channel and released through the outlet half-channel, following a Grotthuss mechanism. The polypeptide is ATP synthase F(0) complex subunit a (Mammuthus primigenius (Siberian woolly mammoth)).